The chain runs to 470 residues: FAD-dependent monooxygenase dpchE (470 aa).

Positions 1–24 are cleaved as a signal peptide; sequence MSEPHFKVIIVGGSITGLTLAHSL. Positions 35, 49, and 108 each coordinate FAD. N-linked (GlcNAc...) asparagine glycosylation occurs at N128. The active site involves R193. Residues D312 and A325 each contribute to the FAD site. The chain crosses the membrane as a helical span at residues 447 to 463; it reads WAVVSRSVLLLVGLAIL.

Belongs to the paxM FAD-dependent monooxygenase family. FAD is required as a cofactor.

It localises to the membrane. It functions in the pathway secondary metabolite biosynthesis; terpenoid biosynthesis. Its function is as follows. FAD-dependent monooxygenase; part of the gene cluster that mediates the biosynthesis of the diterpenoid pyrones higginsianins A and B. The first step of the pathway is the synthesis of the alpha-pyrone moiety by the polyketide synthase dpchA via condensation of one acetyl-CoA starter unit with 3 malonyl-CoA units and 2 methylations. The alpha-pyrone is then combined with geranylgeranyl pyrophosphate (GGPP) formed by the GGPP synthase dpchD through the action of the prenyltransferase dpchC to yield a linear alpha-pyrone diterpenoid. Subsequent steps in the diterpenoid pyrone biosynthetic pathway involve the decalin core formation, which is initiated by the epoxidation of the C10-C11 olefin by the FAD-dependent oxidoreductase dpchE, and is followed by a cyclization cascade catalyzed by the terpene cyclase dpchB. The short chain dehydrogenase/reductase dpchG then oxidizes the 8S hydroxy group to a ketone and the short chain dehydrogenase/reductase dpchH reduces the ketone to the 8R hydroxy group to yield higginsianin B. Finally, the FAD-dependent oxidoreductase dpchF converts higginsianin B into higginsianin A. In Colletotrichum higginsianum (strain IMI 349063) (Crucifer anthracnose fungus), this protein is FAD-dependent monooxygenase dpchE.